Consider the following 368-residue polypeptide: Zinc finger protein 24 (368 aa).

A Glycyl lysine isopeptide (Lys-Gly) (interchain with G-Cter in SUMO2) cross-link involves residue K22. K27 is covalently cross-linked (Glycyl lysine isopeptide (Lys-Gly) (interchain with G-Cter in SUMO1); alternate). K27 participates in a covalent cross-link: Glycyl lysine isopeptide (Lys-Gly) (interchain with G-Cter in SUMO2); alternate. An SCAN box domain is found at 52–134; that stretch reads RQRFRQFGYQ…TVLEDLESEL (83 aa). 2 positions are modified to phosphoserine: S132 and S142. Residues K147, K177, and K236 each participate in a glycyl lysine isopeptide (Lys-Gly) (interchain with G-Cter in SUMO2) cross-link. The C2H2-type 1 zinc finger occupies 251–273; it reads HICDECGKHFSQGSALILHQRIH. The tract at residues 251–301 is necessary and sufficient for nuclear localization; sequence HICDECGKHFSQGSALILHQRIHSGEKPYGCVECGKAFSRSSILVQHQRVH. The residue at position 274 (S274) is a Phosphoserine. Residues K277 and K286 each participate in a glycyl lysine isopeptide (Lys-Gly) (interchain with G-Cter in SUMO2) cross-link. 3 C2H2-type zinc fingers span residues 279–301, 307–329, and 335–357; these read YGCV…QRVH, YKCL…QRIH, and YECV…XXXH. Phosphoserine is present on S292. Residue Y335 is modified to Phosphotyrosine. Glycyl lysine isopeptide (Lys-Gly) (interchain with G-Cter in SUMO2) cross-links involve residues K361 and K367.

Belongs to the krueppel C2H2-type zinc-finger protein family. Sumoylated.

The protein localises to the nucleus. Its function is as follows. Transcription factor required for myelination of differentiated oligodendrocytes. Required for the conversion of oligodendrocytes from the premyelinating to the myelinating state. In the developing central nervous system (CNS), involved in the maintenance in the progenitor stage by promoting the cell cycle. Specifically binds to the 5'-TCAT-3' DNA sequence. Has transcription repressor activity in vitro. This Pan paniscus (Pygmy chimpanzee) protein is Zinc finger protein 24 (ZNF24).